A 196-amino-acid polypeptide reads, in one-letter code: Imidazoleglycerol-phosphate dehydratase (196 aa).

Belongs to the imidazoleglycerol-phosphate dehydratase family.

The protein resides in the cytoplasm. The catalysed reaction is D-erythro-1-(imidazol-4-yl)glycerol 3-phosphate = 3-(imidazol-4-yl)-2-oxopropyl phosphate + H2O. Its pathway is amino-acid biosynthesis; L-histidine biosynthesis; L-histidine from 5-phospho-alpha-D-ribose 1-diphosphate: step 6/9. The chain is Imidazoleglycerol-phosphate dehydratase from Oleidesulfovibrio alaskensis (strain ATCC BAA-1058 / DSM 17464 / G20) (Desulfovibrio alaskensis).